Here is a 610-residue protein sequence, read N- to C-terminus: tRNA uridine 5-carboxymethylaminomethyl modification enzyme MnmG (610 aa).

An FAD-binding site is contributed by 14-19 (GAGHAG). Position 274–288 (274–288 (GPRYCPSIEDKIVKF)) interacts with NAD(+).

Belongs to the MnmG family. Homodimer. Heterotetramer of two MnmE and two MnmG subunits. The cofactor is FAD.

The protein localises to the cytoplasm. Its function is as follows. NAD-binding protein involved in the addition of a carboxymethylaminomethyl (cmnm) group at the wobble position (U34) of certain tRNAs, forming tRNA-cmnm(5)s(2)U34. The protein is tRNA uridine 5-carboxymethylaminomethyl modification enzyme MnmG of Chlamydia muridarum (strain MoPn / Nigg).